Reading from the N-terminus, the 247-residue chain is 3-deoxy-manno-octulosonate cytidylyltransferase (247 aa).

It belongs to the KdsB family.

Its subcellular location is the cytoplasm. The catalysed reaction is 3-deoxy-alpha-D-manno-oct-2-ulosonate + CTP = CMP-3-deoxy-beta-D-manno-octulosonate + diphosphate. It participates in nucleotide-sugar biosynthesis; CMP-3-deoxy-D-manno-octulosonate biosynthesis; CMP-3-deoxy-D-manno-octulosonate from 3-deoxy-D-manno-octulosonate and CTP: step 1/1. It functions in the pathway bacterial outer membrane biogenesis; lipopolysaccharide biosynthesis. Functionally, activates KDO (a required 8-carbon sugar) for incorporation into bacterial lipopolysaccharide in Gram-negative bacteria. This Chlorobium phaeovibrioides (strain DSM 265 / 1930) (Prosthecochloris vibrioformis (strain DSM 265)) protein is 3-deoxy-manno-octulosonate cytidylyltransferase.